A 365-amino-acid chain; its full sequence is U-box domain-containing protein 56 (365 aa).

A coiled-coil region spans residues 176–281; it reads YEEQRRRLEI…ELLRALEKGE (106 aa). In terms of domain architecture, U-box spans 293–365; sequence EPPQCFICPI…AIKDWLQQHP (73 aa).

The enzyme catalyses S-ubiquitinyl-[E2 ubiquitin-conjugating enzyme]-L-cysteine + [acceptor protein]-L-lysine = [E2 ubiquitin-conjugating enzyme]-L-cysteine + N(6)-ubiquitinyl-[acceptor protein]-L-lysine.. It functions in the pathway protein modification; protein ubiquitination. Its function is as follows. Functions as an E3 ubiquitin ligase. The polypeptide is U-box domain-containing protein 56 (PUB56) (Arabidopsis thaliana (Mouse-ear cress)).